The sequence spans 743 residues: Ectonucleotide pyrophosphatase/phosphodiesterase C27A7.3 (743 aa).

The Cytoplasmic segment spans residues 1-23; the sequence is MSNRVVDVNSKKTGTSWKKKLMK. The helical; Signal-anchor for type II membrane protein transmembrane segment at 24–44 threads the bilayer; sequence IVIWSLAMLSFIAGLVLLGLV. The Lumenal portion of the chain corresponds to 45 to 743; that stretch reads AAATISGSKN…LRRNITTSLW (699 aa). Zn(2+)-binding residues include aspartate 87 and threonine 123. Residue threonine 123 is the Nucleophile of the active site. Asparagine 195 carries N-linked (GlcNAc...) asparagine glycosylation. Positions 243, 247, 286, and 287 each coordinate Zn(2+). Residues asparagine 293 and asparagine 320 are each glycosylated (N-linked (GlcNAc...) asparagine). Histidine 383 serves as a coordination point for Zn(2+). Asparagine 406, asparagine 434, and asparagine 536 each carry an N-linked (GlcNAc...) asparagine glycan. Positions 635, 637, 639, 641, and 643 each coordinate Ca(2+). Asparagine 737 carries an N-linked (GlcNAc...) asparagine glycan.

Belongs to the nucleotide pyrophosphatase/phosphodiesterase family. The cofactor is Zn(2+). It depends on Ca(2+) as a cofactor.

The protein localises to the membrane. Probable phosphodiesterase. The sequence is that of Ectonucleotide pyrophosphatase/phosphodiesterase C27A7.3 from Caenorhabditis elegans.